The chain runs to 526 residues: Cytochrome P450 monooxygenase SAT11 (526 aa).

Residues 18–38 (AFLLIAMLYLGYLLCICFYNI) traverse the membrane as a helical segment. Residues Asn-125 and Asn-447 are each glycosylated (N-linked (GlcNAc...) asparagine). Heme is bound at residue Cys-455. Asn-520 is a glycosylation site (N-linked (GlcNAc...) asparagine).

This sequence belongs to the cytochrome P450 family. The cofactor is heme.

Its subcellular location is the membrane. It participates in mycotoxin biosynthesis. Its function is as follows. Cytochrome P450 monooxygenase; part of the satratoxin SC2 cluster involved in the biosynthesis of satratoxins, trichothecene mycotoxins that are associated with human food poisonings. Satratoxins are suggested to be made by products of multiple gene clusters (SC1, SC2 and SC3) that encode 21 proteins in all, including polyketide synthases, acetyltransferases, and other enzymes expected to modify the trichothecene skeleton. SC1 encodes 10 proteins, SAT1 to SAT10. The largest are SAT8, which encodes a putative polyketide synthase (PKS) with a conventional non-reducing architecture, and SAT10, a putative protein containing four ankyrin repeats and thus may be involved in protein scaffolding. The putative short-chain reductase SAT3 may assist the PKS in some capacity. SAT6 contains a secretory lipase domain and acts probably as a trichothecene esterase. SAT5 encodes a putative acetyltransferase, and so, with SAT6, may affect endogenous protection from toxicity. The probable transcription factor SAT9 may regulate the expression of the SC1 cluster. SC2 encodes proteins SAT11 to SAT16, the largest of which encodes the putative reducing PKS SAT13. SAT11 is a cytochrome P450 monooxygenase, while SAT14 and SAT16 are probable acetyltransferases. The SC2 cluster may be regulated by the transcription factor SAT15. SC3 is a small cluster that encodes 5 proteins, SAT17 to SAT21. SAT21 is a putative MFS-type transporter which may have a role in exporting secondary metabolites. The four other proteins putatively encoded in SC3 include the taurine hydroxylase-like protein SAT17, the O-methyltransferase SAT18, the acetyltransferase SAT19, and the Cys6-type zinc finger SAT20, the latter being probably involved in regulation of SC3 expression. The chain is Cytochrome P450 monooxygenase SAT11 from Stachybotrys chartarum (strain CBS 109288 / IBT 7711) (Toxic black mold).